The sequence spans 170 residues: Large ribosomal subunit protein uL10 (170 aa).

Belongs to the universal ribosomal protein uL10 family. In terms of assembly, part of the ribosomal stalk of the 50S ribosomal subunit. The N-terminus interacts with L11 and the large rRNA to form the base of the stalk. The C-terminus forms an elongated spine to which L12 dimers bind in a sequential fashion forming a multimeric L10(L12)X complex.

In terms of biological role, forms part of the ribosomal stalk, playing a central role in the interaction of the ribosome with GTP-bound translation factors. The protein is Large ribosomal subunit protein uL10 of Chlamydia abortus (strain DSM 27085 / S26/3) (Chlamydophila abortus).